Consider the following 123-residue polypeptide: Large ribosomal subunit protein uL18 (123 aa).

The protein belongs to the universal ribosomal protein uL18 family. In terms of assembly, part of the 50S ribosomal subunit; part of the 5S rRNA/L5/L18/L25 subcomplex. Contacts the 5S and 23S rRNAs.

Its function is as follows. This is one of the proteins that bind and probably mediate the attachment of the 5S RNA into the large ribosomal subunit, where it forms part of the central protuberance. The chain is Large ribosomal subunit protein uL18 from Chlamydia pneumoniae (Chlamydophila pneumoniae).